Reading from the N-terminus, the 131-residue chain is Holo-[acyl-carrier-protein] synthase (131 aa).

Positions 8 and 59 each coordinate Mg(2+).

Belongs to the P-Pant transferase superfamily. AcpS family. Mg(2+) is required as a cofactor.

The protein resides in the cytoplasm. The enzyme catalyses apo-[ACP] + CoA = holo-[ACP] + adenosine 3',5'-bisphosphate + H(+). In terms of biological role, transfers the 4'-phosphopantetheine moiety from coenzyme A to a Ser of acyl-carrier-protein. The protein is Holo-[acyl-carrier-protein] synthase of Orientia tsutsugamushi (strain Boryong) (Rickettsia tsutsugamushi).